The chain runs to 291 residues: Small ribosomal subunit biogenesis GTPase RsgA (291 aa).

The region spanning 63–221 is the CP-type G domain; sequence NNELKRPPVS…IADTPGFSAL (159 aa). Residues 112-115 and 164-172 each bind GTP; these read TKHD and GQSGVGKST. Residues Cys245, Cys250, His252, and Cys258 each contribute to the Zn(2+) site.

This sequence belongs to the TRAFAC class YlqF/YawG GTPase family. RsgA subfamily. As to quaternary structure, monomer. Associates with 30S ribosomal subunit, binds 16S rRNA. Requires Zn(2+) as cofactor.

Its subcellular location is the cytoplasm. Functionally, one of several proteins that assist in the late maturation steps of the functional core of the 30S ribosomal subunit. Helps release RbfA from mature subunits. May play a role in the assembly of ribosomal proteins into the subunit. Circularly permuted GTPase that catalyzes slow GTP hydrolysis, GTPase activity is stimulated by the 30S ribosomal subunit. The protein is Small ribosomal subunit biogenesis GTPase RsgA of Staphylococcus epidermidis (strain ATCC 12228 / FDA PCI 1200).